A 604-amino-acid chain; its full sequence is Siderophore iron transporter mirB (604 aa).

The interval 1–61 (MTIGSKFSLL…DNSSDEALPS (61 aa)) is disordered. The next 14 membrane-spanning stretches (helical) occupy residues 73–95 (AVTLVWSKWSLVAVFCLLWLVTL), 115–137 (FQSHSLLTVINIVSSAMVSALYI), 149–168 (AEGWLVMVGLSTLGLIMMAA), 178–200 (ADVFYSVGFAGMNYILCVLAADI), 207–224 (GIAFAFTSSPYMITAFAG), 237–259 (WRWGFGAFAIIFPFVASPVYFVL), 289–311 (YFFAFDIPGVILLAGGLTVFLLP), 326–343 (YIIAMIVTGFVVMVLFVL), 363–385 (TVLGACLIDATYQMSYYCWNSYF), 400–422 (AGYVGSTFQVVSGVLLFMVGFAI), 427–449 (YFRWLLFIGVPLYIFAQGLMIHF), 454–476 (QYIGYIVMCEIFISIGGSIFVLL), 489–511 (YVAAALAVLFISGGIGGAVGNAI), and 566–588 (AQARMLAAGTGLMALMFIWMFMV).

This sequence belongs to the major facilitator superfamily.

The protein localises to the membrane. Its function is as follows. Involved in the transport of siderophore triacestylfusarinine C and so has a role in iron homeostasis. This Emericella nidulans (strain FGSC A4 / ATCC 38163 / CBS 112.46 / NRRL 194 / M139) (Aspergillus nidulans) protein is Siderophore iron transporter mirB (mirB).